The following is a 240-amino-acid chain: Late expression factor 5 homolog (240 aa).

Belongs to the baculoviridae LEF-5 family.

Its function is as follows. Required for late and very late gene expression. This is Late expression factor 5 homolog from Tortricidae (ClGV).